A 396-amino-acid chain; its full sequence is 1-deoxy-D-xylulose 5-phosphate reductoisomerase (396 aa).

The NADPH site is built by Thr10, Gly11, Ser12, Ile13, Gly36, Lys37, Asn38, and Asn124. Residue Lys125 participates in 1-deoxy-D-xylulose 5-phosphate binding. Glu126 is an NADPH binding site. Asp150 provides a ligand contact to Mn(2+). The 1-deoxy-D-xylulose 5-phosphate site is built by Ser151, Glu152, Ser186, and His209. A Mn(2+)-binding site is contributed by Glu152. NADPH is bound at residue Gly215. 1-deoxy-D-xylulose 5-phosphate contacts are provided by Ser222, Asn227, Lys228, and Glu231. Glu231 contributes to the Mn(2+) binding site.

The protein belongs to the DXR family. Requires Mg(2+) as cofactor. It depends on Mn(2+) as a cofactor.

The enzyme catalyses 2-C-methyl-D-erythritol 4-phosphate + NADP(+) = 1-deoxy-D-xylulose 5-phosphate + NADPH + H(+). It participates in isoprenoid biosynthesis; isopentenyl diphosphate biosynthesis via DXP pathway; isopentenyl diphosphate from 1-deoxy-D-xylulose 5-phosphate: step 1/6. Functionally, catalyzes the NADPH-dependent rearrangement and reduction of 1-deoxy-D-xylulose-5-phosphate (DXP) to 2-C-methyl-D-erythritol 4-phosphate (MEP). This Haemophilus ducreyi (strain 35000HP / ATCC 700724) protein is 1-deoxy-D-xylulose 5-phosphate reductoisomerase.